Reading from the N-terminus, the 464-residue chain is Protein btn-1 (464 aa).

The N-terminal stretch at 1-22 (MNRSPSSSGLLPLPGAPSSSWA) is a signal peptide. Helical transmembrane passes span 38–58 (AVFIAFWLFGLINNVLYVIIL), 73–93 (VVLLADVMPSFLTKLVAPYFI), 102–122 (IFIFVTLSSAGMLLIAFTPPS), 129–149 (LIGVVLSSISSGGGELSFLGL), 167–187 (GAGLIGSLLYVMLTDWIGLSV), 190–210 (SLLASAFLPIIMLVSFFLILP), 288–308 (SLFFPYMLPLLLVYIAEYTIN), 332–352 (PFYGFLYQVGVFISRSSIAFI), 354–374 (IHHLYLPSLLQVANLVLLTLH), and 376–396 (LLNFIPSVYIVFVIIFWEGLL).

It belongs to the battenin family.

The protein resides in the vacuole membrane. Involved in vacuolar transport and vacuole pH homeostasis. Also required for cytokinesis. The polypeptide is Protein btn-1 (cln3) (Neurospora crassa (strain ATCC 24698 / 74-OR23-1A / CBS 708.71 / DSM 1257 / FGSC 987)).